A 304-amino-acid chain; its full sequence is UDP-3-O-acyl-N-acetylglucosamine deacetylase (304 aa).

Positions 78, 237, and 241 each coordinate Zn(2+). The Proton donor role is filled by His264.

Belongs to the LpxC family. Zn(2+) is required as a cofactor.

The catalysed reaction is a UDP-3-O-[(3R)-3-hydroxyacyl]-N-acetyl-alpha-D-glucosamine + H2O = a UDP-3-O-[(3R)-3-hydroxyacyl]-alpha-D-glucosamine + acetate. The protein operates within glycolipid biosynthesis; lipid IV(A) biosynthesis; lipid IV(A) from (3R)-3-hydroxytetradecanoyl-[acyl-carrier-protein] and UDP-N-acetyl-alpha-D-glucosamine: step 2/6. Its function is as follows. Catalyzes the hydrolysis of UDP-3-O-myristoyl-N-acetylglucosamine to form UDP-3-O-myristoylglucosamine and acetate, the committed step in lipid A biosynthesis. This is UDP-3-O-acyl-N-acetylglucosamine deacetylase from Thioalkalivibrio sulfidiphilus (strain HL-EbGR7).